We begin with the raw amino-acid sequence, 210 residues long: Glutathione S-transferase mdpJ (210 aa).

The 82-residue stretch at 2–83 (SFGTLYTHNP…YCNDERSSLR (82 aa)) folds into the GST N-terminal domain. Residues 77 to 200 (DERSSLRILQ…VAGGVPDLGL (124 aa)) form the GST C-terminal domain.

It belongs to the GST superfamily.

Its pathway is secondary metabolite biosynthesis. Its function is as follows. Glutathione S-transferase; part of the gene cluster that mediates the biosynthesis of monodictyphenone, a prenyl xanthone derivative. The pathway begins with the synthesis of atrochrysone thioester by the polyketide synthase (PKS) mdpG. The atrochrysone carboxyl ACP thioesterase mdpF then breaks the thioester bond and releases the atrochrysone carboxylic acid from mdpG. The atrochrysone carboxylic acid is then converted to atrochrysone which is further transformed into emodin anthrone. The next step is performed by the anthrone oxygenase mdpH that catalyzes the oxidation of emodinanthrone to emodin. Emodin is further modified to yield monodictyphenone via several steps involving mdpB, mdpC mdpJ, mdpK and mdpL. These enzymes with xptA, xptB and xptC are also proposed to be involved in the synthesis of shamixanthone from emodin. Especially, direct reduction of emodin by the short chain dehydrogenase mdpC followed by dehydration catalyzed by the scytalone dehydratase-like protein mdpB gives loss of oxygen and formation of chrysophanol intermediate in two simple steps. In Emericella nidulans (strain FGSC A4 / ATCC 38163 / CBS 112.46 / NRRL 194 / M139) (Aspergillus nidulans), this protein is Glutathione S-transferase mdpJ.